A 74-amino-acid polypeptide reads, in one-letter code: CLAVATA3/ESR (CLE)-related protein 1 (74 aa).

The first 22 residues, 1–22 (MANLKFLLCLFLICVSLSRSSA), serve as a signal peptide directing secretion. Residue N59 is glycosylated (N-linked (GlcNAc...) asparagine). Hydroxyproline occurs at positions 66 and 69. P69 is a glycosylation site (O-linked (Ara...) hydroxyproline).

Belongs to the CLV3/ESR signal peptide family. In terms of processing, the O-glycosylation (arabinosylation) of the hydroxyproline Pro-69 enhances binding affinity of the CLE1p peptide for its receptor. In terms of tissue distribution, mostly expressed in roots and seedlings, and, to a lower extent, in stems and apex.

It is found in the secreted. Its subcellular location is the extracellular space. In terms of biological role, extracellular signal peptide that regulates cell fate. In Arabidopsis thaliana (Mouse-ear cress), this protein is CLAVATA3/ESR (CLE)-related protein 1.